The sequence spans 116 residues: Large ribosomal subunit protein bL19 (116 aa).

This sequence belongs to the bacterial ribosomal protein bL19 family.

Functionally, this protein is located at the 30S-50S ribosomal subunit interface and may play a role in the structure and function of the aminoacyl-tRNA binding site. This Pseudomonas fluorescens (strain ATCC BAA-477 / NRRL B-23932 / Pf-5) protein is Large ribosomal subunit protein bL19.